Reading from the N-terminus, the 868-residue chain is Lysosomal cholesterol signaling protein (868 aa).

Residues 1-36 (MDSYFSAKNSTLAGDMNATWPASHGFNATGDPPSMS) lie on the Lumenal side of the membrane. Positions 1–368 (MDSYFSAKNS…SAWLLTFPTM (368 aa)) are PIN-like transporter. N-linked (GlcNAc...) asparagine glycosylation is found at N9, N17, and N27. The chain crosses the membrane as a helical span at residues 37–57 (ITRLFPALLECFGIVLCGYIA). Cholesterol contacts are provided by F41 and Y55. Residues 58 to 77 (GRANIITSTQAKGLGNFVSR) lie on the Cytoplasmic side of the membrane. The chain crosses the membrane as a helical span at residues 78–98 (FALPALLFKNMVVLNFSNVDW). Residues 99 to 102 (AFLY) lie on the Lumenal side of the membrane. A helical membrane pass occupies residues 103–123 (SVLIGKASVFFIVCVLTLLVA). The Cytoplasmic segment spans residues 124-131 (SPESRFSK). Residues 132–152 (AGLFPIFATQSNDFALGYPIV) form a discontinuously helical membrane-spanning segment. Residues 153–165 (EALYQSTYPEYLQ) are Lumenal-facing. Residues 166–186 (YIYLVAPISLMMLNPIGFIFC) traverse the membrane as a helical segment. Topologically, residues 187-211 (EIQKSKDTQNASQNKAKIVGLGFLR) are cytoplasmic. A discontinuously helical transmembrane segment spans residues 212–232 (VLQNPIVFMVFVGIAFNFILD). The Lumenal portion of the chain corresponds to 233–241 (KKIPVYMEN). Residues 242-262 (FLDGLANSFSGSALFYLGLTM) traverse the membrane as a discontinuously helical segment. The Cytoplasmic segment spans residues 263 to 271 (VGKIRRLKK). Residues G264, K265, and I266 each contribute to the cholesterol site. A helical transmembrane segment spans residues 272 to 292 (SAFVVLTLLITAKLLVLPLLC). The Lumenal portion of the chain corresponds to 293–313 (REMVELLDKGDSVVNHTSLSN). N307 is a glycosylation site (N-linked (GlcNAc...) asparagine). A discontinuously helical transmembrane segment spans residues 314–334 (YAFLYGVFPVAPGVAIFATQF). Topologically, residues 335-344 (NMEVEIITSG) are cytoplasmic. Residues 345–365 (MVISTFVSAPIMYVSAWLLTF) traverse the membrane as a helical segment. Residues 366 to 379 (PTMDAKPLAYAIQN) are Lumenal-facing. Residues 378 to 715 (QNVSFDISII…FGIFGLDKHL (338 aa)) are GPCR. N-linked (GlcNAc...) asparagine glycosylation occurs at N379. The helical transmembrane segment at 380–400 (VSFDISIISLVSLIWSLSILL) threads the bilayer. Residues 401 to 412 (LSKKYKQLPHML) lie on the Cytoplasmic side of the membrane. A helical transmembrane segment spans residues 413–433 (TANLLIAQTIVCAGMMIWNFV). Over 434–436 (KEK) the chain is Lumenal. The chain crosses the membrane as a helical span at residues 437–457 (NFVGQILVFVLLYSSLYSTYL). Topologically, residues 458–478 (WTGLLAVSLFLLKKRESVQLP) are cytoplasmic. A helical membrane pass occupies residues 479-499 (VGIIIISGWGIPALLVGVLLI). Topologically, residues 500–518 (TGKHNGDSIDSAFFYGKEQ) are lumenal. The chain crosses the membrane as a helical span at residues 519-539 (MITTAVTLFCSILIAGVSLMC). The Cytoplasmic segment spans residues 540 to 658 (MNRTTQAGHY…GDPQLTRHVL (119 aa)). The disordered stretch occupies residues 550–582 (EGFGQSQNHKPVEPGSTAFEENPAPTNEPELFP). R655 provides a ligand contact to cholesterol. The chain crosses the membrane as a helical span at residues 659–679 (LCLLLIIGLFANLSSCLWWLF). Over 680-689 (NHETGRLYVE) the chain is Lumenal. The chain crosses the membrane as a helical span at residues 690–710 (LQFFCAVFNFGQGFISFGIFG). The Cytoplasmic portion of the chain corresponds to 711–868 (LDKHLIILPF…SSPPSVSPKT (158 aa)). A DEP domain is found at 755–833 (YHRDLCIRNI…DEYLFYRFLQ (79 aa)). The segment at 836–868 (PEQSPPARTLRDHQEESYKEIGHSSPPSVSPKT) is disordered. Residues 844–857 (TLRDHQEESYKEIG) show a composition bias toward basic and acidic residues.

Homodimer; via the transporter region and DEP domain. Interacts with the GATOR1 complex; preventing interaction between GATOR1 and KICSTOR; interaction is disrupted upon cholesterol starvation. Widely expressed in adult tissues and during development. In brain, widely distributed in forebrain regions, while it shows a more restricted distribution in the midbrain and hindbrain regions. Expressed at highest level in the lateral part of striatum and hippocampus.

It is found in the lysosome membrane. Cholesterol-binding protein that acts as a regulator of mTORC1 signaling pathway. Acts as a sensor of cholesterol to signal cholesterol sufficiency to mTORC1: in presence of cholesterol, binds cholesterol, leading to disruption of the interaction between the GATOR1 and KICSTOR complexes and promotion of mTORC1 signaling. Upon cholesterol starvation, GPR155/LYCHOS is unable to perturb the association between GATOR1 and KICSTOR, leading to mTORC1 signaling inhibition. Binds indole-3-acetic acid and may play a role in tryptophan metabolism. This Mus musculus (Mouse) protein is Lysosomal cholesterol signaling protein.